The primary structure comprises 297 residues: Vacuolar protein sorting-associated protein 26C (297 aa).

Belongs to the VPS26 family. In terms of assembly, component of the commander complex that is essential for endosomal recycling of transmembrane cargos; the commander complex is composed of the CCC subcomplex and the retriever subcomplex. Component of the heterotrimeric retriever complex consisting of VPS26C, VPS29 and VPS35L; within the complex interacts with VPS35L. Interacts with SNX17 (via C-terminus); the interaction is direct and associates SNX17 with the retriever complex. Interacts with SNX31; the interaction is direct.

The protein resides in the endosome. Functionally, component of the commander complex that is essential for endosomal recycling of transmembrane cargos; the commander complex is composed of the CCC subcomplex and the retriever subcomplex. Component of the retriever complex, which is a heterotrimeric complex related to retromer cargo-selective complex (CSC) and essential for retromer-independent retrieval and recycling of numerous cargos such as integrin alpha-5/beta-1 (ITGA5:ITGB1). The recruitment of the retriever complex to the endosomal membrane involves CCC and WASH complexes. In the endosomes, drives the retriever and recycling of NxxY-motif-containing cargo proteins by coupling to SNX17, a cargo essential for the homeostatic maintenance of numerous cell surface proteins associated with processes that include cell migration, cell adhesion, nutrient supply and cell signaling. This is Vacuolar protein sorting-associated protein 26C (VPS26C) from Pongo abelii (Sumatran orangutan).